Reading from the N-terminus, the 654-residue chain is DNA-directed RNA polymerase III subunit RPC3 (654 aa).

Position 27 is a phosphothreonine (threonine 27). Disordered stretches follow at residues 381 to 401 and 422 to 448; these read LSRK…ASLP and KSLQ…EDPH. Residues serine 392 and serine 394 each carry the phosphoserine modification. Positions 429-444 are enriched in acidic residues; the sequence is DTQEEDEEEEDLDADT. Positions 581 to 602 are leucine-zipper; that stretch reads LEWNMANLLFKKEKLKQENSTL.

This sequence belongs to the RNA polymerase beta chain family. Component of the RNA polymerase III (Pol III) complex consisting of 17 subunits.

It is found in the cytoplasm. The protein resides in the nucleus. Its function is as follows. DNA-dependent RNA polymerase catalyzes the transcription of DNA into RNA using the four ribonucleoside triphosphates as substrates. Specific core component of RNA polymerase III which synthesizes small RNAs, such as 5S rRNA and tRNAs. This Saccharomyces cerevisiae (strain YJM789) (Baker's yeast) protein is DNA-directed RNA polymerase III subunit RPC3 (RPC82).